The chain runs to 303 residues: Glycine--tRNA ligase alpha subunit (303 aa).

It belongs to the class-II aminoacyl-tRNA synthetase family. In terms of assembly, tetramer of two alpha and two beta subunits.

Its subcellular location is the cytoplasm. It carries out the reaction tRNA(Gly) + glycine + ATP = glycyl-tRNA(Gly) + AMP + diphosphate. This chain is Glycine--tRNA ligase alpha subunit, found in Salmonella agona (strain SL483).